A 339-amino-acid chain; its full sequence is Phosphoribosylformylglycinamidine cyclo-ligase (339 aa).

The protein belongs to the AIR synthase family.

The protein localises to the cytoplasm. The enzyme catalyses 2-formamido-N(1)-(5-O-phospho-beta-D-ribosyl)acetamidine + ATP = 5-amino-1-(5-phospho-beta-D-ribosyl)imidazole + ADP + phosphate + H(+). Its pathway is purine metabolism; IMP biosynthesis via de novo pathway; 5-amino-1-(5-phospho-D-ribosyl)imidazole from N(2)-formyl-N(1)-(5-phospho-D-ribosyl)glycinamide: step 2/2. This Streptococcus thermophilus (strain ATCC BAA-491 / LMD-9) protein is Phosphoribosylformylglycinamidine cyclo-ligase.